The chain runs to 108 residues: Putative double-stranded DNA mimic protein PBPRA1522 (108 aa).

Belongs to the putative dsDNA mimic protein family.

May act as a double-stranded DNA (dsDNA) mimic. Probably regulates the activity of a dsDNA-binding protein. The protein is Putative double-stranded DNA mimic protein PBPRA1522 of Photobacterium profundum (strain SS9).